Here is a 2336-residue protein sequence, read N- to C-terminus: RNA1 polyprotein (2336 aa).

Residues 599 to 1210 are Cytoplasmic-facing; it reads QVARIARNIF…YLKEHGLEVL (612 aa). In terms of domain architecture, SF3 helicase spans 797–964; that stretch reads MKDLLDLQQR…PGVVFDPMDC (168 aa). An ATP-binding site is contributed by 827-834; sequence GPSHCGKS. A helical transmembrane segment spans residues 1211 to 1231; that stretch reads LLLAAMMILCVALYYFVGAFI. Residues 1232–1253 are Lumenal-facing; that stretch reads GVMGGALSMGAAMAGLKEVDMK. The Peptidase C3 domain maps to 1278–1486; sequence YARGELDEEV…WADNLPNPCM (209 aa). Active-site for picornain 3C-like protease activity residues include H1320, E1358, and C1450. The RdRp catalytic domain occupies 1771–1899; sequence DRAINCDYSS…SCTDKIAIYF (129 aa).

Belongs to the nepoviruses RNA1 polyprotein family. Post-translationally, specific enzymatic cleavages by picornain 3C-like protease in vivo yield mature proteins. Picornain 3C-like protease is autocatalytically processed. In terms of processing, VPg is uridylylated by the polymerase and is covalently linked to the 5'-end of genomic RNA. This uridylylated form acts as a nucleotide-peptide primer for the polymerase.

Its subcellular location is the host endoplasmic reticulum lumen. It is found in the host endoplasmic reticulum membrane. It catalyses the reaction RNA(n) + a ribonucleoside 5'-triphosphate = RNA(n+1) + diphosphate. Its function is as follows. Picornain 3C-like protease is a thiol protease that cleaves the P1 and P2 polyproteins. In Cycas necrotic stunt virus (CNSV), this protein is RNA1 polyprotein.